Reading from the N-terminus, the 315-residue chain is Gamma-hemolysin component C (315 aa).

Residues 1-29 (MLKNKILTTTLSVSLLAPLANPLLENAKA) form the signal peptide.

The protein belongs to the aerolysin family. As to quaternary structure, toxicity requires sequential binding and synergistic association of a class S and a class F component which form heterooligomeric complexes. HlgB (class F) associates with either hlgA thus forming an AB toxin or with hlgC thus forming a CB toxin.

It localises to the secreted. Functionally, toxin that seems to act by forming pores in the membrane of the cell. Has a hemolytic and a leucotoxic activity. In Staphylococcus aureus (strain NCTC 8325 / PS 47), this protein is Gamma-hemolysin component C (hlgC).